The sequence spans 110 residues: Nucleotide-binding protein HI1146 homolog (110 aa).

It belongs to the RapZ-like family.

In terms of biological role, displays ATPase and GTPase activities. This is Nucleotide-binding protein HI1146 homolog from Aggregatibacter actinomycetemcomitans (Actinobacillus actinomycetemcomitans).